Reading from the N-terminus, the 155-residue chain is UBA-like domain-containing protein 1 (155 aa).

The disordered stretch occupies residues 81–155 (KASESFNSSS…KASAAMEAER (75 aa)). Over residues 83 to 96 (SESFNSSSSPSMAT) the composition is skewed to low complexity. The segment covering 112 to 127 (ANQQSLWTQGPSAQQT) has biased composition (polar residues). Positions 139–155 (QQAASEQKASAAMEAER) are enriched in low complexity.

The protein belongs to the UBALD family.

The polypeptide is UBA-like domain-containing protein 1 (ubald1) (Danio rerio (Zebrafish)).